Consider the following 678-residue polypeptide: MDRDTEAGSNDGTNDNNDTTIPPHTPESNIEAVDHVPPVPRRPSPKLSDDGASGALHVAAASRPTTQVSTIDISTLSFPDGSRGTFSTSATSATSATSATRSVASPQSSASGYTSPRTDLVETVSVASYPATLRPPGDLADLVTGEFNRRSRAWSMLRTQSSSVQPFEASRTGACDSLTGFEKEFDNIPELGEKGITDEQRLSLWKSKMKHYMILSSAGKPIWSRHGDTSLINSYMGVVQTIISFYEGAKDPLLGFTAGNARFVISTQGPLYFVAISRLGESDAQLRSQLDALYMQILSTLTLPTLKNIFVHRPSTDLRKPLEGTESLLSSLADSFTKGSPSALLGALECLRLRKSHRATINNAFLKCRSDKLLYGLIVAGGKLVSVIRPRKHSLHPSDLQLIFNMLFESGGIRAGGGENWVPLCLPAFNNRGYLYMYVSFFDSVETAEENNSNNTNNPEQPPQPPPPKPVTSPDEEIAIILISADKESFFELKSMRDKLALQLAKNGSLALIQSAARQGRPRIETILNTKPLSKEAGQGQGQGQLSHFLYKSRANVQFCQSSLSPAFETSSPPLPSSSPSENGSSQKTTEKLVSRRRLMTLYHHLHASIHAKHSHLKVLHLVSEDAASLAWITPVFEFYCVAGPNMSSGIMTQCANKVVQWAKREEERLFIIGGGVF.

3 disordered regions span residues 1 to 116 (MDRD…YTSP), 449 to 474 (EENNSNNTNNPEQPPQPPPPKPVTSP), and 568 to 591 (FETSSPPLPSSSPSENGSSQKTTE). Over residues 10–20 (NDGTNDNNDTT) the composition is skewed to low complexity. Over residues 63-77 (RPTTQVSTIDISTLS) the composition is skewed to polar residues. The segment covering 87–105 (STSATSATSATSATRSVAS) has biased composition (low complexity). The span at 106–116 (PQSSASGYTSP) shows a compositional bias: polar residues. Low complexity predominate over residues 450–459 (ENNSNNTNNP). A compositionally biased stretch (pro residues) spans 460–471 (EQPPQPPPPKPV).

It belongs to the MON1/SAND family.

It is found in the endosome. The protein localises to the multivesicular body membrane. The protein resides in the prevacuolar compartment membrane. It localises to the vacuole membrane. In complex with CCZ1, is required for multiple vacuole delivery pathways including the cytoplasm to vacuole transport (Cvt), autophagy, pexophagy and endocytosis. The MON1-CCZ1 complex acts at the fusion of vesicles with the vacuole, through its regulation of the SNARE complex during the coordinated priming and docking stages of fusion, and particularly at the stage of tethering/docking. The protein is Vacuolar fusion protein mon1 (apg-13) of Neurospora crassa (strain ATCC 24698 / 74-OR23-1A / CBS 708.71 / DSM 1257 / FGSC 987).